A 446-amino-acid chain; its full sequence is Argininosuccinate synthase (446 aa).

Residues 17 to 25 (AFSGGLDTS) and Ala43 each bind ATP. Residue Tyr99 coordinates L-citrulline. ATP-binding residues include Gly129 and Thr131. Residues Thr131, Asn135, and Asp136 each coordinate L-aspartate. Residue Asn135 coordinates L-citrulline. Position 136 (Asp136) interacts with ATP. Positions 139 and 192 each coordinate L-citrulline. Residue Asp194 coordinates ATP. L-citrulline contacts are provided by Thr201, Glu203, and Glu280.

It belongs to the argininosuccinate synthase family. Type 2 subfamily. As to quaternary structure, homotetramer.

It localises to the cytoplasm. It catalyses the reaction L-citrulline + L-aspartate + ATP = 2-(N(omega)-L-arginino)succinate + AMP + diphosphate + H(+). It participates in amino-acid biosynthesis; L-arginine biosynthesis; L-arginine from L-ornithine and carbamoyl phosphate: step 2/3. The protein is Argininosuccinate synthase of Variovorax paradoxus (strain S110).